The following is a 115-amino-acid chain: Large ribosomal subunit protein bL31B (115 aa).

It belongs to the bacterial ribosomal protein bL31 family. Type B subfamily. Part of the 50S ribosomal subunit.

This chain is Large ribosomal subunit protein bL31B, found in Polynucleobacter asymbioticus (strain DSM 18221 / CIP 109841 / QLW-P1DMWA-1) (Polynucleobacter necessarius subsp. asymbioticus).